The sequence spans 639 residues: UvrABC system protein C (639 aa).

A GIY-YIG domain is found at 31–109 (EQAGVYRMYD…IKKYQPKYNI (79 aa)). The UVR domain maps to 218–253 (SAVIEQLVARMELASNELHFELAAKYRDQIVTLRKV).

The protein belongs to the UvrC family. As to quaternary structure, interacts with UvrB in an incision complex.

Its subcellular location is the cytoplasm. The UvrABC repair system catalyzes the recognition and processing of DNA lesions. UvrC both incises the 5' and 3' sides of the lesion. The N-terminal half is responsible for the 3' incision and the C-terminal half is responsible for the 5' incision. The polypeptide is UvrABC system protein C (Colwellia psychrerythraea (strain 34H / ATCC BAA-681) (Vibrio psychroerythus)).